We begin with the raw amino-acid sequence, 268 residues long: Putative hydro-lyase PSPTO_5379 (268 aa).

This sequence belongs to the D-glutamate cyclase family.

This Pseudomonas syringae pv. tomato (strain ATCC BAA-871 / DC3000) protein is Putative hydro-lyase PSPTO_5379.